The following is a 95-amino-acid chain: Cliotide T5 (95 aa).

Positions 1 to 30 (GIPCGESCVFIPCISTVIGCSCKNKVCYRN) form a cross-link, cyclopeptide (Gly-Asn). Cystine bridges form between cysteine 4–cysteine 20, cysteine 8–cysteine 22, and cysteine 13–cysteine 27. A propeptide spans 31-95 (HVIAAEAKTM…KDHLKMSITN (65 aa)) (removed in mature form).

Post-translationally, contains 3 disulfide bonds. In terms of processing, this is a cyclic peptide. Expressed in stem, shoot, root, leaf, pod and nodule but not in flower and seed (at protein level).

In terms of biological role, probably participates in a plant defense mechanism. This is Cliotide T5 from Clitoria ternatea (Butterfly pea).